Consider the following 201-residue polypeptide: Recombination protein RecR (201 aa).

The C4-type zinc-finger motif lies at 57–72; it reads CADCRTFTEQEKCNIC. In terms of domain architecture, Toprim spans 81-176; sequence GQICVVESPA…DASRIAHGVP (96 aa).

The protein belongs to the RecR family.

May play a role in DNA repair. It seems to be involved in an RecBC-independent recombinational process of DNA repair. It may act with RecF and RecO. This is Recombination protein RecR from Cronobacter sakazakii (strain ATCC BAA-894) (Enterobacter sakazakii).